Consider the following 203-residue polypeptide: Small ribosomal subunit protein uS4 (203 aa).

Positions 93–154 (CRFDNVVFRA…KSRNMDAVRN (62 aa)) constitute an S4 RNA-binding domain.

This sequence belongs to the universal ribosomal protein uS4 family. Part of the 30S ribosomal subunit. Contacts protein S5. The interaction surface between S4 and S5 is involved in control of translational fidelity.

In terms of biological role, one of the primary rRNA binding proteins, it binds directly to 16S rRNA where it nucleates assembly of the body of the 30S subunit. Functionally, with S5 and S12 plays an important role in translational accuracy. In Chloroherpeton thalassium (strain ATCC 35110 / GB-78), this protein is Small ribosomal subunit protein uS4.